The chain runs to 1433 residues: DNA-directed RNA polymerase subunit beta' (1433 aa).

Zn(2+) is bound by residues C66, C68, C81, and C84. The segment at 328–347 (RKSSAVKTDSNRPLKSLSDS) is disordered. The segment covering 329–346 (KSSAVKTDSNRPLKSLSD) has biased composition (polar residues). Mg(2+) contacts are provided by D477, D479, and D481. Zn(2+) contacts are provided by C825, C899, C906, and C909.

This sequence belongs to the RNA polymerase beta' chain family. As to quaternary structure, the RNAP catalytic core consists of 2 alpha, 1 beta, 1 beta' and 1 omega subunit. When a sigma factor is associated with the core the holoenzyme is formed, which can initiate transcription. Mg(2+) serves as cofactor. Zn(2+) is required as a cofactor.

It carries out the reaction RNA(n) + a ribonucleoside 5'-triphosphate = RNA(n+1) + diphosphate. In terms of biological role, DNA-dependent RNA polymerase catalyzes the transcription of DNA into RNA using the four ribonucleoside triphosphates as substrates. In Christiangramia forsetii (strain DSM 17595 / CGMCC 1.15422 / KT0803) (Gramella forsetii), this protein is DNA-directed RNA polymerase subunit beta'.